We begin with the raw amino-acid sequence, 310 residues long: Proline iminopeptidase (310 aa).

Positions 33-290 constitute an AB hydrolase-1 domain; the sequence is PVIFLHGGPG…RVVQAGHCAF (258 aa). S107 functions as the Nucleophile in the catalytic mechanism. The active site involves D260. Catalysis depends on H287, which acts as the Proton donor.

The protein belongs to the peptidase S33 family.

It is found in the cytoplasm. The catalysed reaction is Release of N-terminal proline from a peptide.. Hydrolyzes peptides having the structure Pro-Y-Z to yield free proline. Also hydrolyzes the dipeptide Pro-Gly. This is Proline iminopeptidase (pip) from Neisseria gonorrhoeae.